A 161-amino-acid chain; its full sequence is Nucleotide-binding protein Rfer_2692 (161 aa).

The protein belongs to the YajQ family.

Its function is as follows. Nucleotide-binding protein. This Albidiferax ferrireducens (strain ATCC BAA-621 / DSM 15236 / T118) (Rhodoferax ferrireducens) protein is Nucleotide-binding protein Rfer_2692.